The primary structure comprises 183 residues: Protein jagunal homolog 1-B (183 aa).

The Cytoplasmic portion of the chain corresponds to 1–39 (MASRAGPRATGTDGSDYQHRERVASHYQMSVALKSEIKK). A helical transmembrane segment spans residues 40-60 (LNIAHAVVWFLVAAQVLVSQL). Topologically, residues 61–71 (NLVSHKVVASP) are lumenal. The chain crosses the membrane as a helical span at residues 72–92 (YQWEYTYLLSIIPTVFSFMAL). The Cytoplasmic segment spans residues 93 to 99 (PKNNISY). Residues 100–120 (LVISMISGGLFCIGPILYGGM) traverse the membrane as a helical segment. Residues 121 to 137 (EMFPVAQQLYRHGKAYR) are Lumenal-facing. The helical transmembrane segment at 138-158 (FIFGFSAVSIMYLVLIISVQV) threads the bilayer. Residues 159 to 183 (HGWQIYYSKKLLDAWFTNTQDKKKK) lie on the Cytoplasmic side of the membrane.

Belongs to the jagunal family.

Its subcellular location is the endoplasmic reticulum membrane. Its function is as follows. Endoplasmic reticulum transmembrane protein involved in vesicle-mediated transport, which is required for neutrophil function. This Danio rerio (Zebrafish) protein is Protein jagunal homolog 1-B (jagn1b).